The chain runs to 446 residues: Histidinol dehydrogenase homolog (446 aa).

Zn(2+) is bound at residue His-266. Catalysis depends on proton acceptor residues Glu-334 and His-335. His-427 contributes to the Zn(2+) binding site.

The protein belongs to the histidinol dehydrogenase family. It depends on Zn(2+) as a cofactor.

This is Histidinol dehydrogenase homolog from Colwellia psychrerythraea (strain 34H / ATCC BAA-681) (Vibrio psychroerythus).